The primary structure comprises 231 residues: ATP phosphoribosyltransferase (231 aa).

It belongs to the ATP phosphoribosyltransferase family. Short subfamily. Heteromultimer composed of HisG and HisZ subunits.

Its subcellular location is the cytoplasm. It catalyses the reaction 1-(5-phospho-beta-D-ribosyl)-ATP + diphosphate = 5-phospho-alpha-D-ribose 1-diphosphate + ATP. Its pathway is amino-acid biosynthesis; L-histidine biosynthesis; L-histidine from 5-phospho-alpha-D-ribose 1-diphosphate: step 1/9. Catalyzes the condensation of ATP and 5-phosphoribose 1-diphosphate to form N'-(5'-phosphoribosyl)-ATP (PR-ATP). Has a crucial role in the pathway because the rate of histidine biosynthesis seems to be controlled primarily by regulation of HisG enzymatic activity. This is ATP phosphoribosyltransferase from Brucella suis biovar 1 (strain 1330).